Reading from the N-terminus, the 276-residue chain is Putative hydroxypyruvate isomerase (276 aa).

Residues Glu-150 and Glu-249 each act as proton donor/acceptor in the active site.

This sequence belongs to the hyi family.

It carries out the reaction 3-hydroxypyruvate = 2-hydroxy-3-oxopropanoate. Functionally, catalyzes the reversible isomerization between hydroxypyruvate and 2-hydroxy-3-oxopropanoate (also termed tartronate semialdehyde). The chain is Putative hydroxypyruvate isomerase (hyi) from Danio rerio (Zebrafish).